A 312-amino-acid chain; its full sequence is tRNA dimethylallyltransferase (312 aa).

17 to 24 (GPTASGKT) provides a ligand contact to ATP. 19–24 (TASGKT) provides a ligand contact to substrate. Interaction with substrate tRNA regions lie at residues 42–45 (DSAL), 166–170 (QRLLR), and 247–252 (RCVGYR).

It belongs to the IPP transferase family. In terms of assembly, monomer. Mg(2+) serves as cofactor.

It carries out the reaction adenosine(37) in tRNA + dimethylallyl diphosphate = N(6)-dimethylallyladenosine(37) in tRNA + diphosphate. Its function is as follows. Catalyzes the transfer of a dimethylallyl group onto the adenine at position 37 in tRNAs that read codons beginning with uridine, leading to the formation of N6-(dimethylallyl)adenosine (i(6)A). The chain is tRNA dimethylallyltransferase from Sodalis glossinidius (strain morsitans).